The sequence spans 747 residues: Ubiquitin carboxyl-terminal hydrolase 13 (747 aa).

In terms of domain architecture, USP spans 140-668 (FGYENFGNTC…TAYVLFYKAM (529 aa)). The Nucleophile role is filled by Cys149. Disordered stretches follow at residues 172–305 (PKKS…RPPD) and 318–367 (YENP…RKKS). Over residues 174–183 (KSRESDQPRK) the composition is skewed to basic and acidic residues. Position 198 is a phosphoserine (Ser198). Residues 225-235 (PVNSVNSNTAG) are compositionally biased toward polar residues. Residues 251–260 (HVQDNNKKEG) are compositionally biased toward basic and acidic residues. Positions 319–343 (ENPSRGSSNSNNLDLKGESNSSLST) are enriched in polar residues. Residue His619 is the Proton acceptor of the active site.

It belongs to the peptidase C19 family.

The enzyme catalyses Thiol-dependent hydrolysis of ester, thioester, amide, peptide and isopeptide bonds formed by the C-terminal Gly of ubiquitin (a 76-residue protein attached to proteins as an intracellular targeting signal).. The polypeptide is Ubiquitin carboxyl-terminal hydrolase 13 (UBP13) (Saccharomyces cerevisiae (strain ATCC 204508 / S288c) (Baker's yeast)).